Here is a 372-residue protein sequence, read N- to C-terminus: DNA-directed RNA polymerase subunit alpha (372 aa).

An alpha N-terminal domain (alpha-NTD) region spans residues 1 to 268 (MIFDEDSNSI…DQFQPFINFD (268 aa)). The alpha C-terminal domain (alpha-CTD) stretch occupies residues 280–372 (KDTLPYDSNL…ESLSKQYSEE (93 aa)).

This sequence belongs to the RNA polymerase alpha chain family. Homodimer. The RNAP catalytic core consists of 2 alpha, 1 beta, 1 beta' and 1 omega subunit. When a sigma factor is associated with the core the holoenzyme is formed, which can initiate transcription.

The catalysed reaction is RNA(n) + a ribonucleoside 5'-triphosphate = RNA(n+1) + diphosphate. In terms of biological role, DNA-dependent RNA polymerase catalyzes the transcription of DNA into RNA using the four ribonucleoside triphosphates as substrates. This Ehrlichia chaffeensis (strain ATCC CRL-10679 / Arkansas) protein is DNA-directed RNA polymerase subunit alpha.